The primary structure comprises 157 residues: 2-C-methyl-D-erythritol 2,4-cyclodiphosphate synthase (157 aa).

D8 and H10 together coordinate a divalent metal cation. Residues 8 to 10 (DVH) and 34 to 35 (HS) each bind 4-CDP-2-C-methyl-D-erythritol 2-phosphate. An a divalent metal cation-binding site is contributed by H42. Residues 56–58 (DIG), 61–65 (FPDTD), 132–135 (TTTE), F139, and R142 each bind 4-CDP-2-C-methyl-D-erythritol 2-phosphate.

This sequence belongs to the IspF family. In terms of assembly, homotrimer. Requires a divalent metal cation as cofactor.

It carries out the reaction 4-CDP-2-C-methyl-D-erythritol 2-phosphate = 2-C-methyl-D-erythritol 2,4-cyclic diphosphate + CMP. The protein operates within isoprenoid biosynthesis; isopentenyl diphosphate biosynthesis via DXP pathway; isopentenyl diphosphate from 1-deoxy-D-xylulose 5-phosphate: step 4/6. Its function is as follows. Involved in the biosynthesis of isopentenyl diphosphate (IPP) and dimethylallyl diphosphate (DMAPP), two major building blocks of isoprenoid compounds. Catalyzes the conversion of 4-diphosphocytidyl-2-C-methyl-D-erythritol 2-phosphate (CDP-ME2P) to 2-C-methyl-D-erythritol 2,4-cyclodiphosphate (ME-CPP) with a corresponding release of cytidine 5-monophosphate (CMP). The sequence is that of 2-C-methyl-D-erythritol 2,4-cyclodiphosphate synthase from Geotalea uraniireducens (strain Rf4) (Geobacter uraniireducens).